The chain runs to 197 residues: Protein-methionine-sulfoxide reductase heme-binding subunit MsrQ (197 aa).

Helical transmembrane passes span 10–30 (IFIVGCLFPVWWLYEAAMNLL), 42–62 (LGLGALTFLLVTLSMTPLQKL), 75–95 (LGLWVFAYIVLHILCYLFFIL), 110–130 (PYIIVGALGFLGLLVLAVTSN), 147–167 (LVYAVLGLGLLHFLWIVRSDL), and 169–189 (EWAIYAFIGAVLMVLRIPAVA).

It belongs to the MsrQ family. Heterodimer of a catalytic subunit (MsrP) and a heme-binding subunit (MsrQ). The cofactor is FMN. Heme b serves as cofactor.

It localises to the cell inner membrane. Part of the MsrPQ system that repairs oxidized periplasmic proteins containing methionine sulfoxide residues (Met-O), using respiratory chain electrons. Thus protects these proteins from oxidative-stress damage caused by reactive species of oxygen and chlorine generated by the host defense mechanisms. MsrPQ is essential for the maintenance of envelope integrity under bleach stress, rescuing a wide series of structurally unrelated periplasmic proteins from methionine oxidation. MsrQ provides electrons for reduction to the reductase catalytic subunit MsrP, using the quinone pool of the respiratory chain. The sequence is that of Protein-methionine-sulfoxide reductase heme-binding subunit MsrQ from Pseudomonas putida (strain ATCC 47054 / DSM 6125 / CFBP 8728 / NCIMB 11950 / KT2440).